The following is a 295-amino-acid chain: Hydroxyquinol 1,2-dioxygenase (295 aa).

Fe cation contacts are provided by Tyr-165, Tyr-200, His-224, and His-226.

This sequence belongs to the intradiol ring-cleavage dioxygenase family. Fe(3+) is required as a cofactor.

The enzyme catalyses benzene-1,2,4-triol + O2 = maleylacetate + 2 H(+). Its pathway is aromatic compound metabolism. Its function is as follows. Involved in the gamma-resorcylate (2,6-dihydroxybenzoate) catabolism. Catalyzes the conversion of hydroxyquinol to malelylacetate. This chain is Hydroxyquinol 1,2-dioxygenase, found in Rhizobium sp. (strain MTP-10005).